The sequence spans 199 residues: Pre-histone-like nucleoprotein (199 aa).

Residue S2 is modified to N-acetylserine; by host. Positions 2–23 are excised as a propeptide; it reads SILISPSDNTGWGLGTGKMYGG. K26 is modified (N6-acetyllysine; by host). Positions 189–199 match the Nuclear localization signal motif; sequence RRKASVRRRRT.

This sequence belongs to the adenoviridae histone-like nucleoprotein family. Interacts with the core-capsid bridging protein; this interaction bridges the virus core to the capsid. Interacts with host NPM1; this interaction might play a role in placing the pre-histone-like nucleoprotein on the viral DNA or regulating viral gene expression. Interacts with host HMGB1; this interaction inhibits host immune response. In terms of processing, cleaved near the N-terminus by the viral protease during virion maturation to form the mature protein.

The protein resides in the virion. It localises to the host nucleus. The protein localises to the host nucleolus. Plays a role in the inhibition of host immune response within the nucleus. Interacts with cellular nucleosomes and immobilizes the host immune danger signal HMGB1 on chromatin. In turn, prevents HMGB1 release out of the cell and thus decreases inflammation. Also plays a role in the wrapping and condensation of the viral DNA. May also promote viral genome import into the nucleus. The chain is Pre-histone-like nucleoprotein from Murine adenovirus A serotype 1 (MAdV-1).